The following is a 300-amino-acid chain: Protein YIF1B-B (300 aa).

The disordered stretch occupies residues 1-46 (MNQESSFRAPPKRRVRGSNPNISNPHQLFDDTSGGPVPHGGDFPNH). The Cytoplasmic segment spans residues 1–142 (MNQESSFRAP…APRFDINAPD (142 aa)). Residues 143-163 (LYIPVMAFITYILVAGLALGT) traverse the membrane as a helical segment. Topologically, residues 164–178 (QSRFSPEILGMQASS) are extracellular. A helical membrane pass occupies residues 179-199 (ALAWLIVEVLAILLSLYLVTV). Topologically, residues 200-205 (NTDLTT) are cytoplasmic. Residues 206–226 (VDLVAFSGYKYVGMISGVIAG) form a helical membrane-spanning segment. L227 is a topological domain (extracellular). Residues 228–248 (LFGNTGYYVVLAWCCISIVFF) form a helical membrane-spanning segment. The Cytoplasmic portion of the chain corresponds to 249 to 278 (MIRTLRLKILSEAAAEGVLVRGARNQLRMY). Residues 279-299 (LTMAIAAVQPIFMYWLTYHLV) form a helical membrane-spanning segment. A topological domain (extracellular) is located at residue R300.

Belongs to the YIF1 family.

The protein resides in the endoplasmic reticulum membrane. The protein localises to the golgi apparatus membrane. Its subcellular location is the endoplasmic reticulum-Golgi intermediate compartment membrane. Its function is as follows. Functions in endoplasmic reticulum to Golgi vesicle-mediated transport and regulates the proper organization of the endoplasmic reticulum and the Golgi. Plays a key role in targeting to neuronal dendrites receptors such as HTR1A. Plays also a role in primary cilium and sperm flagellum assembly probably through protein transport to these compartments. The sequence is that of Protein YIF1B-B (yif1b-b) from Xenopus laevis (African clawed frog).